We begin with the raw amino-acid sequence, 136 residues long: Large ribosomal subunit protein uL16 (136 aa).

It belongs to the universal ribosomal protein uL16 family. Part of the 50S ribosomal subunit.

Binds 23S rRNA and is also seen to make contacts with the A and possibly P site tRNAs. This is Large ribosomal subunit protein uL16 from Psychromonas ingrahamii (strain DSM 17664 / CCUG 51855 / 37).